The chain runs to 188 residues: Sulfopyruvate decarboxylase subunit beta (188 aa).

This sequence belongs to the TPP enzyme family. Heterododecamer composed of 6 subunits alpha and 6 subunits beta. It depends on thiamine diphosphate as a cofactor.

It carries out the reaction 3-sulfopyruvate + H(+) = sulfoacetaldehyde + CO2. Its pathway is cofactor biosynthesis; coenzyme M biosynthesis; sulfoacetaldehyde from phosphoenolpyruvate and sulfite: step 4/4. Its activity is regulated as follows. Inhibited by oxygen when heated in air at 80 degrees Celsius. The enzyme is reactivated by addition of dithionite. Its function is as follows. Involved in the biosynthesis of the coenzyme M (2-mercaptoethanesulfonic acid). Catalyzes the decarboxylation of sulfopyruvate to sulfoacetaldehyde. This Methanocaldococcus jannaschii (strain ATCC 43067 / DSM 2661 / JAL-1 / JCM 10045 / NBRC 100440) (Methanococcus jannaschii) protein is Sulfopyruvate decarboxylase subunit beta.